The following is a 376-amino-acid chain: DNA-directed RNA polymerase subunit alpha (376 aa).

Residues 1–259 (MSDCSQNLLY…KHFSIFEKMD (259 aa)) are alpha N-terminal domain (alpha-NTD). The interval 276 to 376 (KDDILHKLVL…DKIRSKNGKG (101 aa)) is alpha C-terminal domain (alpha-CTD).

Belongs to the RNA polymerase alpha chain family. As to quaternary structure, homodimer. The RNAP catalytic core consists of 2 alpha, 1 beta, 1 beta' and 1 omega subunit. When a sigma factor is associated with the core the holoenzyme is formed, which can initiate transcription.

The catalysed reaction is RNA(n) + a ribonucleoside 5'-triphosphate = RNA(n+1) + diphosphate. In terms of biological role, DNA-dependent RNA polymerase catalyzes the transcription of DNA into RNA using the four ribonucleoside triphosphates as substrates. This Chlamydia abortus (strain DSM 27085 / S26/3) (Chlamydophila abortus) protein is DNA-directed RNA polymerase subunit alpha.